The chain runs to 257 residues: Thiazole synthase (257 aa).

The active-site Schiff-base intermediate with DXP is the lysine 96. Residues glycine 157, 184 to 185 (AG), and 206 to 207 (NT) contribute to the 1-deoxy-D-xylulose 5-phosphate site.

This sequence belongs to the ThiG family. As to quaternary structure, homotetramer. Forms heterodimers with either ThiH or ThiS.

The protein resides in the cytoplasm. It carries out the reaction [ThiS sulfur-carrier protein]-C-terminal-Gly-aminoethanethioate + 2-iminoacetate + 1-deoxy-D-xylulose 5-phosphate = [ThiS sulfur-carrier protein]-C-terminal Gly-Gly + 2-[(2R,5Z)-2-carboxy-4-methylthiazol-5(2H)-ylidene]ethyl phosphate + 2 H2O + H(+). Its pathway is cofactor biosynthesis; thiamine diphosphate biosynthesis. Catalyzes the rearrangement of 1-deoxy-D-xylulose 5-phosphate (DXP) to produce the thiazole phosphate moiety of thiamine. Sulfur is provided by the thiocarboxylate moiety of the carrier protein ThiS. In vitro, sulfur can be provided by H(2)S. This is Thiazole synthase from Rhizobium meliloti (strain 1021) (Ensifer meliloti).